A 324-amino-acid chain; its full sequence is Glyoxylate/hydroxypyruvate reductase B (324 aa).

Active-site residues include Arg237 and Glu266. Catalysis depends on His285, which acts as the Proton donor.

Belongs to the D-isomer specific 2-hydroxyacid dehydrogenase family. GhrB subfamily. Homodimer.

Its subcellular location is the cytoplasm. It catalyses the reaction glycolate + NADP(+) = glyoxylate + NADPH + H(+). It carries out the reaction (R)-glycerate + NAD(+) = 3-hydroxypyruvate + NADH + H(+). The catalysed reaction is (R)-glycerate + NADP(+) = 3-hydroxypyruvate + NADPH + H(+). Its function is as follows. Catalyzes the NADPH-dependent reduction of glyoxylate and hydroxypyruvate into glycolate and glycerate, respectively. The sequence is that of Glyoxylate/hydroxypyruvate reductase B from Salmonella gallinarum (strain 287/91 / NCTC 13346).